The primary structure comprises 333 residues: Taste receptor type 2 member 38 (333 aa).

At 1 to 17 the chain is on the extracellular side; it reads MLTLTHICTVSYEVRST. A helical membrane pass occupies residues 18-38; the sequence is FLFISVLEFAVGFLTNAFISL. The Cytoplasmic segment spans residues 39–55; sequence VNFWDVVKRQPLSNSDC. The helical transmembrane segment at 56–76 threads the bilayer; the sequence is VLLCLSISRLFLHGLLFLSAI. Over 77–94 the chain is Extracellular; the sequence is QLTHFQKLSEPLNHSYQV. A helical transmembrane segment spans residues 95–115; sequence ILMLWMIANQANLWLAACLSL. At 116-142 the chain is on the cytoplasmic side; that stretch reads LYCSKLIRFSHTFLICLASWVSRKISQ. Residues 143–163 form a helical membrane-spanning segment; that stretch reads MLLGIILCSCICTVLCVWCFF. Topologically, residues 164–190 are extracellular; the sequence is GRLHFTVTTVLFMNNNTRLNWQIKDLN. Asn-178 carries N-linked (GlcNAc...) asparagine glycosylation. A helical transmembrane segment spans residues 191 to 211; sequence LFYSFLFCYLWSVPPFLLFLV. At 212–251 the chain is on the cytoplasmic side; sequence SSGMLTVSLGRHMRTMKVYTRDSRDPSLEAHIKALKSLVS. Residues 252–272 traverse the membrane as a helical segment; it reads FFCFFVISSCAAFISVPLLIL. Residues 273 to 276 lie on the Extracellular side of the membrane; it reads WHDK. Residues 277–297 traverse the membrane as a helical segment; it reads IGVMVCVGIMAACPSGHAAVL. The Cytoplasmic segment spans residues 298–333; it reads ISGNAKLRRAVTTILLWAQSSLKVRADHMADSRTLC.

The protein belongs to the G-protein coupled receptor T2R family.

It is found in the membrane. Its function is as follows. Receptor that may play a role in the perception of bitterness and is gustducin-linked. May play a role in sensing the chemical composition of the gastrointestinal content. The activity of this receptor may stimulate alpha gustducin, mediate PLC-beta-2 activation and lead to the gating of TRPM5. This is Taste receptor type 2 member 38 (TAS2R38) from Papio hamadryas (Hamadryas baboon).